We begin with the raw amino-acid sequence, 75 residues long: UPF0154 protein SERP0914 (75 aa).

A helical membrane pass occupies residues 3–23 (IWVAIILIVIALIAGLIGGFL).

It belongs to the UPF0154 family.

The protein localises to the membrane. This is UPF0154 protein SERP0914 from Staphylococcus epidermidis (strain ATCC 35984 / DSM 28319 / BCRC 17069 / CCUG 31568 / BM 3577 / RP62A).